Here is a 177-residue protein sequence, read N- to C-terminus: Small ribosomal subunit protein uS5 (177 aa).

One can recognise an S5 DRBM domain in the interval 21-84 (LLDRVVKIKR…KQASRSMIHV (64 aa)).

This sequence belongs to the universal ribosomal protein uS5 family. As to quaternary structure, part of the 30S ribosomal subunit. Contacts proteins S4 and S8.

Its function is as follows. With S4 and S12 plays an important role in translational accuracy. Functionally, located at the back of the 30S subunit body where it stabilizes the conformation of the head with respect to the body. This chain is Small ribosomal subunit protein uS5, found in Rhodopirellula baltica (strain DSM 10527 / NCIMB 13988 / SH1).